A 210-amino-acid polypeptide reads, in one-letter code: Oxygen-insensitive NADPH nitroreductase (210 aa).

An NADP(+)-binding site is contributed by 150-155 (GVSLMG).

This sequence belongs to the nitroreductase family.

Reduction of a variety of nitroaromatic compounds using NADPH as source of reducing equivalents; two electrons are transferred. Capable of reducing metronidazole; inactive RdxA renders the bacterium resistant to this compound. The reduction of metronidazole generates hydroxylamine, a potent mutagen and bactericide. This chain is Oxygen-insensitive NADPH nitroreductase (rdxA), found in Helicobacter pylori (strain ATCC 700392 / 26695) (Campylobacter pylori).